The primary structure comprises 225 residues: Prolactin (225 aa).

Residues 1-28 form the signal peptide; the sequence is MTIQGSDRKGTLLLLVMSNLLFCQNVHP. A disulfide bridge links cysteine 32 with cysteine 37. Phosphoserine is present on residues serine 52 and serine 116. 2 cysteine pairs are disulfide-bonded: cysteine 84-cysteine 200 and cysteine 217-cysteine 225.

Belongs to the somatotropin/prolactin family. As to quaternary structure, interacts with PRLR.

The protein localises to the secreted. Functionally, prolactin acts primarily on the mammary gland by promoting lactation. The protein is Prolactin (PRL) of Alexandromys montebelli (Japanese grass vole).